The chain runs to 727 residues: Telomere repeats-binding bouquet formation protein 1 (727 aa).

ARM repeat units follow at residues 101-144 (ELFE…RETG) and 339-382 (NGLP…GEYP). Positions 398–446 (ENNLEEHWRKAKEILHRIEQLEREGNEEEIQRENYQDNISSMNISIQNT) form a coiled coil. Residues 457 to 468 (RGSKAEDEDKSH) show a composition bias toward basic and acidic residues. Residues 457–493 (RGSKAEDEDKSHSRQLQSYKSHGVMSKACTNDDQMKT) are disordered. The interaction with TERF1 stretch occupies residues 523–662 (QNLHEETTFE…QRLSNESTTP (140 aa)). Residue threonine 648 is modified to Phosphothreonine. The Myb-like domain occupies 666–719 (KKRRIRKNFTEEEVNYLFNGVKKMGNHWNSILWSFPFQQGRKAVDLAHKYHKLT).

The protein belongs to the TERB1 family. Component of the MAJIN-TERB1-TERB2 complex, composed of MAJIN, TERB1 and TERB2. Interacts with TERF1, STAG3 and SUN1. Interacts (via Myb-like domain) with the cohesin complex; probably mediated via interaction with STAG3. Phosphorylated by CDK. Phosphorylation by CDK takes place in late prophase when the cap exchange is prominent. is important for the stabilization of telomere attachment but dispenable for the cap exchange.

The protein localises to the chromosome. It is found in the telomere. It localises to the nucleus inner membrane. Functionally, meiosis-specific telomere-associated protein involved in meiotic telomere attachment to the nucleus inner membrane, a crucial step for homologous pairing and synapsis. Component of the MAJIN-TERB1-TERB2 complex, which promotes telomere cap exchange by mediating attachment of telomeric DNA to the inner nuclear membrane and replacement of the protective cap of telomeric chromosomes: in early meiosis, the MAJIN-TERB1-TERB2 complex associates with telomeric DNA and the shelterin/telosome complex. During prophase, the complex matures and promotes release of the shelterin/telosome complex from telomeric DNA. In the MAJIN-TERB1-TERB2 complex, TERB1 probably mediates association with the shelterin/telosome complex via interaction with TERF1, promoting priming telomeric DNA attachment'. Promotes telomere association with the nuclear envelope and deposition of the SUN-KASH/LINC complex. Also recruits cohesin to telomeres to develop structural rigidity. This is Telomere repeats-binding bouquet formation protein 1 from Homo sapiens (Human).